Consider the following 107-residue polypeptide: 2Fe-2S ferredoxin CtmE (107 aa).

The region spanning 3–106 (VKVTYVDSAN…GLVIHTLEPE (104 aa)) is the 2Fe-2S ferredoxin-type domain. 4 residues coordinate [2Fe-2S] cluster: Cys-41, Cys-47, Cys-50, and Cys-87.

This sequence belongs to the adrenodoxin/putidaredoxin family. Requires [2Fe-2S] cluster as cofactor.

It functions in the pathway terpene metabolism; monoterpene degradation. Involved in the degradation of the cyclic monoterpene limonene. Probably part of an electron transfer system involved in the oxidation of limonene to perillyl alcohol. The chain is 2Fe-2S ferredoxin CtmE from Castellaniella defragrans (strain DSM 12143 / CCUG 39792 / 65Phen) (Alcaligenes defragrans).